The chain runs to 427 residues: Peptidase B (427 aa).

Positions 195 and 200 each coordinate Mn(2+). Lys207 is an active-site residue. Mn(2+)-binding residues include Asp218, Asp277, and Glu279. Arg281 is an active-site residue.

The protein belongs to the peptidase M17 family. In terms of assembly, homohexamer. The cofactor is Mn(2+).

The protein localises to the cytoplasm. It catalyses the reaction Release of an N-terminal amino acid, Xaa, from a peptide or arylamide. Xaa is preferably Glu or Asp but may be other amino acids, including Leu, Met, His, Cys and Gln.. In terms of biological role, probably plays an important role in intracellular peptide degradation. This chain is Peptidase B, found in Escherichia coli (strain SE11).